A 102-amino-acid chain; its full sequence is Large ribosomal subunit protein bL21 (102 aa).

Belongs to the bacterial ribosomal protein bL21 family. In terms of assembly, part of the 50S ribosomal subunit. Contacts protein L20.

Its function is as follows. This protein binds to 23S rRNA in the presence of protein L20. This Bifidobacterium animalis subsp. lactis (strain AD011) protein is Large ribosomal subunit protein bL21.